A 785-amino-acid chain; its full sequence is Cadherin-7 (785 aa).

A signal peptide spans 1–27; the sequence is MKLGKVEFCHLLQIIALFLCLSGMNQA. A propeptide spanning residues 28–47 is cleaved from the precursor; sequence EPSRSRSKPYFQSGRTRTKR. Residues 48–607 are Extracellular-facing; it reads SWVWNQFFVL…AYILPAGLST (560 aa). Cadherin domains lie at 49–153, 154–262, 263–377, 378–482, and 482–599; these read WVWN…EPKF, LDGP…PPRF, PRRS…PPVF, TSRL…APEF, and FAME…AEAY. N-linked (GlcNAc...) asparagine glycosylation is found at Asn-449 and Asn-530. Residues 608 to 628 form a helical membrane-spanning segment; the sequence is GALIAILACVLTLLVLVLLIV. At 629 to 785 the chain is on the cytoplasmic side; sequence TMRRRKKEPL…YGSGPDCLYS (157 aa).

It is found in the cell membrane. Its function is as follows. Cadherins are calcium-dependent cell adhesion proteins. They preferentially interact with themselves in a homophilic manner in connecting cells; cadherins may thus contribute to the sorting of heterogeneous cell types. In Gallus gallus (Chicken), this protein is Cadherin-7 (CDH7).